Reading from the N-terminus, the 384-residue chain is DNA replication and repair protein RecF (384 aa).

43–50 contacts ATP; the sequence is GENGSGKT.

It belongs to the RecF family.

The protein localises to the cytoplasm. Its function is as follows. The RecF protein is involved in DNA metabolism; it is required for DNA replication and normal SOS inducibility. RecF binds preferentially to single-stranded, linear DNA. It also seems to bind ATP. In Brucella abortus (strain 2308), this protein is DNA replication and repair protein RecF.